The primary structure comprises 410 residues: MYQSMNLSVSSNFTHRSLLESRFPIFSTGFRKSVNLKPPRVSSGPESNDSGHETLTDKLIHLLRAVPDWADEIKERGMQQKRSLYTHEKWVEHRSSLRHVRHLLSSFSSRVILSLIPPVFFFTSVAVVIASYNSAVALDWLPGIFPILRSSSLPYQLTAPALALLLVFRTEASYSRYEEGRKAWVGIIAGTNDLARQVICSVDSSGDELIIKDLLLRYIAAFPVALKCHVIYGSDIARDLRNLIEADDLSLILQAKHRPRCVIEFISQSIQLLKLDDAKRDLLESKMLHLHEGIGVCEQLMGIPIPLSYTRLTSRFLVFWHLTLPIILWDECHWIVVPATFISAASLFCIEEVGVLIEEPFPMLALDELCDLVHSNIQEAVKSEKVIRNRIIAKIKLHEFKHSSNGRHRS.

Over 1 to 110 (MYQSMNLSVS…RHLLSSFSSR (110 aa)) the chain is Lumenal, thylakoid. The chain crosses the membrane as a helical span at residues 111 to 131 (VILSLIPPVFFFTSVAVVIAS). The Stromal segment spans residues 132–147 (YNSAVALDWLPGIFPI). A helical transmembrane segment spans residues 148-168 (LRSSSLPYQLTAPALALLLVF). At 169-315 (RTEASYSRYE…PLSYTRLTSR (147 aa)) the chain is on the lumenal, thylakoid side. Transmembrane regions (helical) follow at residues 316-336 (FLVF…HWIV) and 337-357 (VPAT…GVLI). The Lumenal, thylakoid portion of the chain corresponds to 358 to 410 (EEPFPMLALDELCDLVHSNIQEAVKSEKVIRNRIIAKIKLHEFKHSSNGRHRS).

This sequence belongs to the anion channel-forming bestrophin (TC 1.A.46) family. Voltage-dependent chloride channel subfamily. Mostly expressed in flowers and leaves and, to a lower extent, in stems and roots.

The protein resides in the plastid. The protein localises to the chloroplast thylakoid membrane. It carries out the reaction chloride(in) = chloride(out). Its activity is regulated as follows. More active at positive than at negative voltages. Repressed by the general anion channel inhibitors dithiocyanatostilbene-2,20-disulphonic acid (DIDS) and niflumic acid. Voltage-dependent chloride (Cl) channel critical for proton motive force (PMF) partitioning across the thylakoid membrane by anion influx into the lumen during illumination, thus being required for photoprotection under fluctuating light conditions. Influences thylakoid ultrastructure, including lumen size and organization. During photosynthetic response on transition from dark to low light, involved in a sequential mechanism of adaptation; VCCN1 and CLCe first trigger the activation of photoprotection, which is later down-regulated by KEA3 to a low steady state, while adjusting electron transport. On transition from low to high light, accelerates the activation of photoprotection by building up a pH gradient across the thylakoid membrane. This Arabidopsis thaliana (Mouse-ear cress) protein is Voltage-dependent chloride channel 1, chloroplastic.